Consider the following 310-residue polypeptide: Urease accessory protein UreD (310 aa).

This sequence belongs to the UreD family. UreD, UreF and UreG form a complex that acts as a GTP-hydrolysis-dependent molecular chaperone, activating the urease apoprotein by helping to assemble the nickel containing metallocenter of UreC. The UreE protein probably delivers the nickel.

The protein resides in the cytoplasm. Required for maturation of urease via the functional incorporation of the urease nickel metallocenter. The polypeptide is Urease accessory protein UreD (Synechococcus sp. (strain RCC307)).